Here is a 165-residue protein sequence, read N- to C-terminus: Dihydrofolate reductase (165 aa).

Positions 3–165 constitute a DHFR domain; the sequence is VVGLIWAQST…RYRLHSYHRS (163 aa). A substrate-binding site is contributed by 7 to 9; that stretch reads IWA. NADP(+) is bound by residues 8–9 and 16–21; these read WA and IGRDGG. Position 29 (aspartate 29) interacts with substrate. 45-48 is an NADP(+) binding site; that stretch reads GRRT. Position 62 (arginine 62) interacts with substrate. NADP(+) contacts are provided by residues 67–70 and 100–105; these read LSRQ and IGGEQI. Threonine 119 serves as a coordination point for substrate.

It belongs to the dihydrofolate reductase family.

It carries out the reaction (6S)-5,6,7,8-tetrahydrofolate + NADP(+) = 7,8-dihydrofolate + NADPH + H(+). The protein operates within cofactor biosynthesis; tetrahydrofolate biosynthesis; 5,6,7,8-tetrahydrofolate from 7,8-dihydrofolate: step 1/1. In terms of biological role, key enzyme in folate metabolism. Catalyzes an essential reaction for de novo glycine and purine synthesis, and for DNA precursor synthesis. The protein is Dihydrofolate reductase (folA) of Mycobacterium leprae (strain TN).